The primary structure comprises 296 residues: N-acetylmuramic acid 6-phosphate etherase (296 aa).

In terms of domain architecture, SIS spans 54 to 217 (VISCFQKGGR…STASMVGIGK (164 aa)). Glutamate 82 serves as the catalytic Proton donor. Residue glutamate 113 is part of the active site.

Belongs to the GCKR-like family. MurNAc-6-P etherase subfamily. As to quaternary structure, homodimer.

It catalyses the reaction N-acetyl-D-muramate 6-phosphate + H2O = N-acetyl-D-glucosamine 6-phosphate + (R)-lactate. Its pathway is amino-sugar metabolism; N-acetylmuramate degradation. In terms of biological role, specifically catalyzes the cleavage of the D-lactyl ether substituent of MurNAc 6-phosphate, producing GlcNAc 6-phosphate and D-lactate. The protein is N-acetylmuramic acid 6-phosphate etherase of Listeria monocytogenes serotype 4b (strain CLIP80459).